We begin with the raw amino-acid sequence, 193 residues long: MNFLAHLHLAHLADNSLSGNLLADFVRGNPATHYPPDVVEGIYMHRRIDVMTDNLPEAREAREWFRHETRRVAPITLDVMWDHFLSRHWTQISPDFPLQAFVGYAHAQVATILPDFPPRFVNLNDYLWSEKWLERYRDMDFIQNVLNGMANRRPRLDALRDSWYDLDAHYDALEERFWHFYPRMMAQAARKAL.

It belongs to the AcpH family.

It catalyses the reaction holo-[ACP] + H2O = apo-[ACP] + (R)-4'-phosphopantetheine + H(+). Converts holo-ACP to apo-ACP by hydrolytic cleavage of the phosphopantetheine prosthetic group from ACP. The polypeptide is Acyl carrier protein phosphodiesterase (Salmonella paratyphi A (strain ATCC 9150 / SARB42)).